The primary structure comprises 714 residues: Protein artemis (714 aa).

4 disordered regions span residues Glu-391 to Ala-500, Glu-516 to Ile-577, Ala-598 to Leu-617, and Glu-638 to Asp-683. A compositionally biased stretch (polar residues) spans Asn-427–Thr-440. The segment covering Val-447–Ser-468 has biased composition (acidic residues). Composition is skewed to polar residues over residues Ser-484–Ala-500 and Gly-532–Val-543. Over residues Ser-544–Ser-561 the composition is skewed to low complexity. The segment covering Glu-562–Ile-577 has biased composition (polar residues). 2 stretches are compositionally biased toward basic and acidic residues: residues Asp-603–Trp-615 and Arg-660–Ser-670. Residue Ser-670 is modified to Phosphoserine; by ATM.

This sequence belongs to the DNA repair metallo-beta-lactamase (DRMBL) family. In terms of assembly, interacts with PRKDC. Post-translationally, phosphorylation on undefined residues by PRKDC may stimulate endonucleolytic activity on 5' and 3' hairpins and overhangs. PRKDC must remain present, even after phosphorylation, for efficient hairpin opening.

The protein localises to the nucleus. Its function is as follows. Required for V(D)J recombination, the process by which exons encoding the antigen-binding domains of immunoglobulins and T-cell receptor proteins are assembled from individual V, (D), and J gene segments. V(D)J recombination is initiated by the lymphoid specific RAG endonuclease complex, which generates site specific DNA double strand breaks (DSBs). These DSBs present two types of DNA end structures: hairpin sealed coding ends and phosphorylated blunt signal ends. These ends are independently repaired by the non homologous end joining (NHEJ) pathway to form coding and signal joints respectively. This protein exhibits single-strand specific 5'-3' exonuclease activity in isolation, and acquires endonucleolytic activity on 5' and 3' hairpins and overhangs when in a complex with PRKDC. The latter activity is required specifically for the resolution of closed hairpins prior to the formation of the coding joint. May also be required for the repair of complex DSBs induced by ionizing radiation, which require substantial end-processing prior to religation by NHEJ. This is Protein artemis (DCLRE1C) from Gallus gallus (Chicken).